The chain runs to 181 residues: Der GTPase-activating protein YihI (181 aa).

Residues 1–73 (MSRIKKARKP…DPRIGSKKPI (73 aa)) form a disordered region. Basic and acidic residues predominate over residues 22 to 32 (NRTDRDVESRE). Positions 33-42 (LKRKRKRKGL) are enriched in basic residues. The span at 55-67 (QARRNAQKKDPRI) shows a compositional bias: basic and acidic residues.

This sequence belongs to the YihI family. As to quaternary structure, interacts with Der.

Functionally, a GTPase-activating protein (GAP) that modifies Der/EngA GTPase function. May play a role in ribosome biogenesis. The sequence is that of Der GTPase-activating protein YihI from Aliivibrio fischeri (strain MJ11) (Vibrio fischeri).